Consider the following 480-residue polypeptide: Heparin cofactor 2 (480 aa).

Positions 1 to 19 are cleaved as a signal peptide; sequence MQHRPHLLLISLTIMSVCG. Asn-32 is a glycosylation site (N-linked (GlcNAc...) asparagine). A run of 2 repeats spans residues 56-66 and 70-80. A 2 X 11 AA approximate repeats, Asp/Glu-rich (acidic) (hirudin-like) region spans residues 56-80; sequence GEEDDDYLDLEKLLSEDDDYIDIID. Sulfotyrosine is present on residues Tyr-62 and Tyr-75. A glycan (N-linked (GlcNAc...) asparagine) is linked at Asn-169. The tract at residues 173-193 is glycosaminoglycan-binding site; sequence KYEILTIHNLFRKLTHRLFRR. N-linked (GlcNAc...) asparagine glycans are attached at residues Asn-368 and Asn-404.

The protein belongs to the serpin family. N-glycosylated; different glycan composition appears to lead to two forms of this protein (56 and 60 kDa).

Its function is as follows. Thrombin inhibitor activated by the glycosaminoglycans, heparin or dermatan sulfate. In the presence of the latter, HC-II becomes the predominant thrombin inhibitor in place of antithrombin III (AT). The polypeptide is Heparin cofactor 2 (SERPIND1) (Oryctolagus cuniculus (Rabbit)).